The chain runs to 230 residues: Large ribosomal subunit protein uL1 (230 aa).

Belongs to the universal ribosomal protein uL1 family. As to quaternary structure, part of the 50S ribosomal subunit.

Its function is as follows. Binds directly to 23S rRNA. The L1 stalk is quite mobile in the ribosome, and is involved in E site tRNA release. Protein L1 is also a translational repressor protein, it controls the translation of the L11 operon by binding to its mRNA. This chain is Large ribosomal subunit protein uL1, found in Leuconostoc mesenteroides subsp. mesenteroides (strain ATCC 8293 / DSM 20343 / BCRC 11652 / CCM 1803 / JCM 6124 / NCDO 523 / NBRC 100496 / NCIMB 8023 / NCTC 12954 / NRRL B-1118 / 37Y).